Reading from the N-terminus, the 203-residue chain is DNA-directed RNA polymerase III subunit rpc8 (203 aa).

This sequence belongs to the eukaryotic RPB7/RPC8 RNA polymerase subunit family. In terms of assembly, component of the RNA polymerase III (Pol III) complex consisting of 17 subunits. Rpc25/rpc8 and rpc17/rpc9 form a Pol III subcomplex.

Its subcellular location is the cytoplasm. It localises to the nucleus. Functionally, DNA-dependent RNA polymerase catalyzes the transcription of DNA into RNA using the four ribonucleoside triphosphates as substrates. Specific peripheric component of RNA polymerase III which synthesizes small RNAs, such as 5S rRNA and tRNA. This Schizosaccharomyces pombe (strain 972 / ATCC 24843) (Fission yeast) protein is DNA-directed RNA polymerase III subunit rpc8 (rpc25).